Here is a 302-residue protein sequence, read N- to C-terminus: Oxygen-dependent coproporphyrinogen-III oxidase (302 aa).

Ser-94 is a binding site for substrate. The a divalent metal cation site is built by His-98 and His-108. Residue His-108 is the Proton donor of the active site. 110-112 (NVR) provides a ligand contact to substrate. 2 residues coordinate a divalent metal cation: His-147 and His-177. The tract at residues 242 to 277 (YVEFNLVWDRGTLFGLQTGGRTESILMSMPPLVRWE) is important for dimerization. 260–262 (GGR) provides a ligand contact to substrate.

This sequence belongs to the aerobic coproporphyrinogen-III oxidase family. In terms of assembly, homodimer. A divalent metal cation serves as cofactor.

The protein resides in the cytoplasm. It carries out the reaction coproporphyrinogen III + O2 + 2 H(+) = protoporphyrinogen IX + 2 CO2 + 2 H2O. Its pathway is porphyrin-containing compound metabolism; protoporphyrin-IX biosynthesis; protoporphyrinogen-IX from coproporphyrinogen-III (O2 route): step 1/1. Involved in the heme biosynthesis. Catalyzes the aerobic oxidative decarboxylation of propionate groups of rings A and B of coproporphyrinogen-III to yield the vinyl groups in protoporphyrinogen-IX. The protein is Oxygen-dependent coproporphyrinogen-III oxidase of Erwinia tasmaniensis (strain DSM 17950 / CFBP 7177 / CIP 109463 / NCPPB 4357 / Et1/99).